The chain runs to 218 residues: Cytidylate kinase (218 aa).

7 to 15 (GPSASGKSS) serves as a coordination point for ATP.

The protein belongs to the cytidylate kinase family. Type 1 subfamily.

The protein localises to the cytoplasm. It catalyses the reaction CMP + ATP = CDP + ADP. The enzyme catalyses dCMP + ATP = dCDP + ADP. This Borrelia hermsii (strain HS1 / DAH) protein is Cytidylate kinase.